A 639-amino-acid chain; its full sequence is tRNA uridine 5-carboxymethylaminomethyl modification enzyme MnmG (639 aa).

FAD-binding positions include 13 to 18 (GGGHAG), V125, and S180. An NAD(+)-binding site is contributed by 273–287 (GPRYCPSIEDKVVRF). Q370 is a binding site for FAD. The disordered stretch occupies residues 620-639 (KRQGGNGPQSPRPDDGRARA).

This sequence belongs to the MnmG family. As to quaternary structure, homodimer. Heterotetramer of two MnmE and two MnmG subunits. It depends on FAD as a cofactor.

The protein resides in the cytoplasm. Functionally, NAD-binding protein involved in the addition of a carboxymethylaminomethyl (cmnm) group at the wobble position (U34) of certain tRNAs, forming tRNA-cmnm(5)s(2)U34. The polypeptide is tRNA uridine 5-carboxymethylaminomethyl modification enzyme MnmG (Thioalkalivibrio sulfidiphilus (strain HL-EbGR7)).